The following is a 189-amino-acid chain: MSGTLPLAMTASESFVGMQVLAQDKEVKATFIALDRKLPANLKVPYMKNAKYRTCICPSSNHLVDDCVCEDVIIAYTAHRNNAVAALLYSDGNVIHRSGTLKPKSQNRFDLRGFLTSVNPGESSKAEAGTSKSTQKAYDRKDKSPSKGKNSKKGGKKSSSERKRKEYSSNSETDLSSDSDANTRKSKRK.

Residues 55-69 form a C4-type zinc finger; the sequence is CICPSSNHLVDDCVC. The disordered stretch occupies residues 114–189; that stretch reads FLTSVNPGES…DANTRKSKRK (76 aa). The segment covering 158–167 has biased composition (basic and acidic residues); sequence SSSERKRKEY. A compositionally biased stretch (low complexity) spans 168–180; that stretch reads SSNSETDLSSDSD.

The protein belongs to the phytoreovirus RNA-binding protein family.

It localises to the host cytoplasm. Functionally, constituent of viral factories. Binds to ssRNA and dsRNA. This is RNA-binding protein from Alopecurus aequalis (Barnyard grass).